The primary structure comprises 436 residues: GTPase Der (436 aa).

EngA-type G domains follow at residues 4-167 (PTVA…PVEE) and 175-351 (IRFS…ESQN). GTP contacts are provided by residues 10–17 (GRPNVGKS), 57–61 (DTGGI), 119–122 (NKVD), 181–188 (GRPNVGKS), 229–233 (DTAGM), and 294–297 (NKWD). In terms of domain architecture, KH-like spans 352–436 (KRIPSAVLND…PINLIARKRK (85 aa)).

Belongs to the TRAFAC class TrmE-Era-EngA-EngB-Septin-like GTPase superfamily. EngA (Der) GTPase family. As to quaternary structure, associates with the 50S ribosomal subunit.

Its function is as follows. GTPase that plays an essential role in the late steps of ribosome biogenesis. This is GTPase Der from Streptococcus agalactiae serotype Ia (strain ATCC 27591 / A909 / CDC SS700).